The primary structure comprises 577 residues: Multidrug transporter TPO1_2 (577 aa).

The tract at residues 1–63 (MSSTSSDRPY…ALSKNSTQTS (63 aa)) is disordered. N-linked (GlcNAc...) asparagine glycosylation is found at N44 and N58. 12 consecutive transmembrane segments (helical) span residues 137 to 157 (VMLC…SSIF), 167 to 187 (IYHV…LGFA), 204 to 224 (GVLV…ATAK), 234 to 254 (FFAG…FADM), 263 to 283 (AICL…VIGS), 293 to 313 (WLEY…LFFF), 368 to 388 (PLLL…YLLL), 406 to 426 (ELPY…IWWM), 446 to 466 (LLPM…FCWT), 475 to 495 (WIVP…IFLP), 504 to 526 (YLLI…GAAF), and 541 to 561 (YAGL…LLFL).

Belongs to the major facilitator superfamily. DHA1 family. Polyamines/proton antiporter (TC 2.A.1.2.16) subfamily.

Its subcellular location is the cell membrane. Multidrug resistance transporter involved in resistance to azole antifungal drugs such as the imidazoles miconazole, ketoconazole, and tioconazole; as well as the triazoles itraconazole and fluconazole. Also plays a role in the resistance to other antifungal drug families such as the polyene amphotericin B, the pyrimide analog flucytosine, the fungicide mancozeb, and the polyamine spermine. Decreases the intracellular accumulation of clotrimazole by mediating its extrusion from cells. Plays a role in biofilm formation. The protein is Multidrug transporter TPO1_2 of Candida glabrata (strain ATCC 2001 / BCRC 20586 / JCM 3761 / NBRC 0622 / NRRL Y-65 / CBS 138) (Yeast).